The primary structure comprises 241 residues: MALPGLKRILLKLSGEALMGPSPFGIDPETVASMAAEVKEAKDRGLEICLVIGGGNIFRGMAGAAKGMDRAQADYMGMLATVMNALAMQNALEQLGVQTRVQSAIEMDKVCEPVIRRRAERHMEKGRVVIFAAGVGAPYFTTDSGAALRAAEMKCDALLKGTSVDGVYNADPKQDANAVRYDRLSYDRVLADNLKVMDASAVALCRDNHIPIVVFNIREPGNLARVLAGEGVSTVVGDGAV.

Position 12 to 15 (12 to 15 (KLSG)) interacts with ATP. Gly54 lines the UMP pocket. Residues Gly55 and Arg59 each contribute to the ATP site. UMP contacts are provided by residues Asp74 and 135–142 (VGAPYFTT). ATP-binding residues include Thr162, Tyr168, and Asp171.

It belongs to the UMP kinase family. In terms of assembly, homohexamer.

It localises to the cytoplasm. It catalyses the reaction UMP + ATP = UDP + ADP. Its pathway is pyrimidine metabolism; CTP biosynthesis via de novo pathway; UDP from UMP (UMPK route): step 1/1. With respect to regulation, inhibited by UTP. Functionally, catalyzes the reversible phosphorylation of UMP to UDP. The sequence is that of Uridylate kinase from Sphingopyxis alaskensis (strain DSM 13593 / LMG 18877 / RB2256) (Sphingomonas alaskensis).